Here is a 436-residue protein sequence, read N- to C-terminus: 3-ketoacyl-CoA thiolase (436 aa).

The Acyl-thioester intermediate role is filled by cysteine 99. Active-site proton acceptor residues include histidine 392 and cysteine 422.

The protein belongs to the thiolase-like superfamily. Thiolase family. Heterotetramer of two alpha chains (FadJ) and two beta chains (FadI).

Its subcellular location is the cytoplasm. It carries out the reaction an acyl-CoA + acetyl-CoA = a 3-oxoacyl-CoA + CoA. Its pathway is lipid metabolism; fatty acid beta-oxidation. Catalyzes the final step of fatty acid oxidation in which acetyl-CoA is released and the CoA ester of a fatty acid two carbons shorter is formed. This is 3-ketoacyl-CoA thiolase from Shigella flexneri serotype 5b (strain 8401).